The primary structure comprises 485 residues: G2/mitotic-specific cyclin-A1 (485 aa).

The tract at residues methionine 1–asparagine 24 is disordered. Positions lysine 8–asparagine 24 are enriched in polar residues.

The protein belongs to the cyclin family. Cyclin AB subfamily. As to expression, expressed in the cell lineages ABarp, C and E as well as the NSM neuroblasts.

Its function is as follows. Involved in the control of the cell cycle after S phase. May bind to and activate cdk-1 and/or cdk-2 to promote cell cycle progression. Necessary for embryogenesis. The protein is G2/mitotic-specific cyclin-A1 (cya-1) of Caenorhabditis elegans.